The chain runs to 89 residues: Cell division topological specificity factor (89 aa).

It belongs to the MinE family.

In terms of biological role, prevents the cell division inhibition by proteins MinC and MinD at internal division sites while permitting inhibition at polar sites. This ensures cell division at the proper site by restricting the formation of a division septum at the midpoint of the long axis of the cell. The polypeptide is Cell division topological specificity factor (Clostridium beijerinckii (strain ATCC 51743 / NCIMB 8052) (Clostridium acetobutylicum)).